Here is a 201-residue protein sequence, read N- to C-terminus: Recombination protein RecR (201 aa).

A C4-type zinc finger spans residues 60 to 75 (CQICGNIDTRDPCTIC). Residues 83–178 (TLLVVVETVA…KITRLAHGVP (96 aa)) enclose the Toprim domain.

It belongs to the RecR family.

Functionally, may play a role in DNA repair. It seems to be involved in an RecBC-independent recombinational process of DNA repair. It may act with RecF and RecO. This is Recombination protein RecR from Beijerinckia indica subsp. indica (strain ATCC 9039 / DSM 1715 / NCIMB 8712).